The chain runs to 419 residues: Tol-Pal system protein TolB (419 aa).

The first 19 residues, 1–19 (MFNRIISLFLLLFTGQVIA), serve as a signal peptide directing secretion.

Belongs to the TolB family. As to quaternary structure, the Tol-Pal system is composed of five core proteins: the inner membrane proteins TolA, TolQ and TolR, the periplasmic protein TolB and the outer membrane protein Pal. They form a network linking the inner and outer membranes and the peptidoglycan layer.

Its subcellular location is the periplasm. Part of the Tol-Pal system, which plays a role in outer membrane invagination during cell division and is important for maintaining outer membrane integrity. The polypeptide is Tol-Pal system protein TolB (Legionella pneumophila subsp. pneumophila (strain Philadelphia 1 / ATCC 33152 / DSM 7513)).